We begin with the raw amino-acid sequence, 378 residues long: Cobalt-precorrin-5B C(1)-methyltransferase (378 aa).

It belongs to the CbiD family.

The catalysed reaction is Co-precorrin-5B + S-adenosyl-L-methionine = Co-precorrin-6A + S-adenosyl-L-homocysteine. It participates in cofactor biosynthesis; adenosylcobalamin biosynthesis; cob(II)yrinate a,c-diamide from sirohydrochlorin (anaerobic route): step 6/10. In terms of biological role, catalyzes the methylation of C-1 in cobalt-precorrin-5B to form cobalt-precorrin-6A. In Tolumonas auensis (strain DSM 9187 / NBRC 110442 / TA 4), this protein is Cobalt-precorrin-5B C(1)-methyltransferase.